A 306-amino-acid chain; its full sequence is Embryogenic cell protein 40 (306 aa).

Disordered stretches follow at residues Met-1–Gly-57, Ala-80–Gly-171, and Gly-188–His-306. The span at Ile-12–Gln-23 shows a compositional bias: polar residues. Residues Val-32–Thr-44 are compositionally biased toward low complexity. Gly residues-rich tracts occupy residues Gly-85–Thr-119, Gly-127–Val-151, and Gly-159–Gly-171. The segment covering Gly-194 to Ser-204 has biased composition (low complexity). Basic and acidic residues-rich tracts occupy residues His-205–His-218 and Lys-243–Thr-259. The segment covering Thr-260 to Ala-278 has biased composition (low complexity). Residues Val-279–Pro-298 are compositionally biased toward basic and acidic residues.

The protein belongs to the plant dehydrin family.

The protein is Embryogenic cell protein 40 (ECP40) of Daucus carota (Wild carrot).